Here is a 213-residue protein sequence, read N- to C-terminus: Kynurenine formamidase (213 aa).

Residue Trp-18 coordinates substrate. Zn(2+) contacts are provided by His-48, His-52, and Asp-54. The active-site Proton donor/acceptor is His-58. Zn(2+) contacts are provided by His-160 and Glu-172.

It belongs to the Cyclase 1 superfamily. KynB family. As to quaternary structure, homodimer. It depends on Zn(2+) as a cofactor.

The catalysed reaction is N-formyl-L-kynurenine + H2O = L-kynurenine + formate + H(+). The protein operates within amino-acid degradation; L-tryptophan degradation via kynurenine pathway; L-kynurenine from L-tryptophan: step 2/2. Catalyzes the hydrolysis of N-formyl-L-kynurenine to L-kynurenine, the second step in the kynurenine pathway of tryptophan degradation. The sequence is that of Kynurenine formamidase from Burkholderia pseudomallei (strain 1106a).